A 58-amino-acid chain; its full sequence is Large ribosomal subunit protein eL20 (58 aa).

The segment at 37 to 58 is disordered; sequence TTVGSQHNRKRPQIEIKEVSAA. Residues 48 to 58 are compositionally biased toward basic and acidic residues; sequence PQIEIKEVSAA.

The protein belongs to the eukaryotic ribosomal protein eL20 family. As to quaternary structure, part of the 50S ribosomal subunit. Binds 23S rRNA.

The protein is Large ribosomal subunit protein eL20 of Halorubrum lacusprofundi (strain ATCC 49239 / DSM 5036 / JCM 8891 / ACAM 34).